A 356-amino-acid chain; its full sequence is Tyrosine recombinase XerS (356 aa).

The Core-binding (CB) domain maps to leucine 16–threonine 121. The Tyr recombinase domain occupies glycine 169 to aspartate 354. Residues arginine 210, lysine 234, histidine 306, arginine 309, and histidine 332 contribute to the active site. Tyrosine 341 functions as the O-(3'-phospho-DNA)-tyrosine intermediate in the catalytic mechanism.

Belongs to the 'phage' integrase family. XerS subfamily.

The protein resides in the cytoplasm. FtsK is required for recombination. Functionally, site-specific tyrosine recombinase, which acts by catalyzing the cutting and rejoining of the recombining DNA molecules. Essential to convert dimers of the bacterial chromosome into monomers to permit their segregation at cell division. The polypeptide is Tyrosine recombinase XerS (Streptococcus pneumoniae serotype 19F (strain G54)).